The primary structure comprises 300 residues: MASQQFPPQNQETQPGKEHAMDPRPEAIIQSYKPANKLKDKVAIVTGGDSGIGRAVCLCFALEGATVAFTYVKGQEEKDAEETLRALRDIRARTGAKDPMAIPADLGYDDNCRKVVDEVAGAYGGAIDILVNNAAEQYERPSITDITEDDLERVFRTNIFSYFFMSKHAVKRMRDRRGGAGAGGCSIINTSSINAYKGNKTLLDYTATKGAIVAFTRALALQLAEEGIRVNGVAPGPIWTPLIPASFAEEKVRQFGSQVPMGRAGQPSEVAPSFVFLASDDASYMSGQMLHVNGGVIVNG.

Over residues 1–14 the composition is skewed to polar residues; that stretch reads MASQQFPPQNQETQ. The interval 1 to 23 is disordered; sequence MASQQFPPQNQETQPGKEHAMDP. 44–68 lines the NAD(+) pocket; that stretch reads IVTGGDSGIGRAVCLCFALEGATVA. A substrate-binding site is contributed by Ser-192. Tyr-205 serves as the catalytic Proton acceptor.

This sequence belongs to the short-chain dehydrogenases/reductases (SDR) family.

May act as a short alcohol-polyol-sugar dehydrogenase possibly related to carbohydrate metabolism and the acquisition of desiccation tolerance. May also be involved in signal transduction. This chain is Glucose and ribitol dehydrogenase homolog, found in Oryza sativa subsp. japonica (Rice).